The sequence spans 391 residues: Putative penicillin-binding protein PbpX (391 aa).

The chain crosses the membrane as a helical span at residues 21 to 40 (GKLLFGLLAVMVCITIWNAL). The interval 44–76 (SEENEPSQETAAVSNTDQKKEVKKKTAKKSEEQ) is disordered. The span at 50-59 (SQETAAVSNT) shows a compositional bias: polar residues.

It belongs to the beta-lactamase family.

Its subcellular location is the cell membrane. The polypeptide is Putative penicillin-binding protein PbpX (pbpX) (Bacillus subtilis (strain 168)).